A 130-amino-acid polypeptide reads, in one-letter code: Small ribosomal subunit protein uS9 (130 aa).

Residues 109 to 130 (RMKERRKYGLKKARKAPQFSKR) form a disordered region. Positions 111–130 (KERRKYGLKKARKAPQFSKR) are enriched in basic residues.

The protein belongs to the universal ribosomal protein uS9 family.

In Caldanaerobacter subterraneus subsp. tengcongensis (strain DSM 15242 / JCM 11007 / NBRC 100824 / MB4) (Thermoanaerobacter tengcongensis), this protein is Small ribosomal subunit protein uS9.